The sequence spans 223 residues: Peroxynitrite isomerase 1 (223 aa).

Residues 69–75 carry the GXWXGXG motif; sequence GVWRGEG. Heme b is bound by residues Lys186 and His213.

It belongs to the nitrobindin family. Homodimer. The cofactor is heme b.

The catalysed reaction is peroxynitrite = nitrate. It participates in nitrogen metabolism. Functionally, heme-binding protein able to scavenge peroxynitrite and to protect free L-tyrosine against peroxynitrite-mediated nitration, by acting as a peroxynitrite isomerase that converts peroxynitrite to nitrate. Therefore, this protein likely plays a role in peroxynitrite sensing and in the detoxification of reactive nitrogen and oxygen species (RNS and ROS, respectively). Is able to bind nitric oxide (NO) in vitro, but may act as a sensor of peroxynitrite levels in vivo. The chain is Peroxynitrite isomerase 1 from Mycobacterium marinum (strain ATCC BAA-535 / M).